A 577-amino-acid polypeptide reads, in one-letter code: Cleavage stimulation factor subunit 2 (577 aa).

At Ser-14 the chain carries Phosphoserine. The region spanning 16–94 (RSVFVGNIPY…RALRVDNAAS (79 aa)) is the RRM domain. Residues 108–248 (APVIESPYGE…VNGAPPLMQA (141 aa)) form an interactions with CSTF3 and SYMPK region. Lys-189 participates in a covalent cross-link: Glycyl lysine isopeptide (Lys-Gly) (interchain with G-Cter in SUMO2). The interval 206 to 243 (QPVHGAGPGSGSNVSMNQQNPQAPQAQSLGGMHVNGAP) is disordered. The span at 222 to 232 (NQQNPQAPQAQ) shows a compositional bias: low complexity. An Omega-N-methylarginine modification is found at Arg-308. The tract at residues 340-409 (EVEPRGYLGP…DGRGGRDPRG (70 aa)) is disordered. A compositionally biased stretch (basic and acidic residues) spans 360 to 373 (PGHESRGPPPHELR). One copy of the 1; approximate repeat lies at 410 to 414 (IDARG). The segment at 410–469 (IDARGMEARAMEARGLDARGLEARAMEARAMEARAMEARAMEARAMEVRGMEARGMDTRG) is 12 X 5 AA tandem repeats of M-E-A-R-[AG]. 2 repeat units span residues 415–419 (MEARA) and 420–424 (MEARG). One copy of the 4; approximate repeat lies at 425–429 (LDARG). The 5; approximate repeat unit spans residues 430 to 434 (LEARA). 4 repeat units span residues 435–439 (MEARA), 440–444 (MEARA), 445–449 (MEARA), and 450–454 (MEARA). A 10; approximate repeat occupies 455–459 (MEVRG). Residues 460–464 (MEARG) form repeat 11. Residues 465–469 (MDTRG) form a 12; approximate repeat. Arg-468 and Arg-475 each carry omega-N-methylarginine. Residues 508 to 532 (GMQGASIQGGSQPGGFSPGQNQVTP) are disordered. The interval 514–577 (IQGGSQPGGF…EQIQKSTGAP (64 aa)) is interaction with RPO2TC1. A phosphoserine mark is found at Ser-518 and Ser-524.

The CSTF complex is composed of CSTF1 (50 kDa subunit), CSTF2 (64 kDa subunit) and CSTF3 (77 kDa subunit). CSTF2 directly interacts with CSTF3, SYMPK and RPO2TC1. Interacts with HSF1 in heat-stressed cells. Interacts with CPSF2, CPSF3 and FIP1L1. Interacts with DDX1.

The protein localises to the nucleus. Functionally, one of the multiple factors required for polyadenylation and 3'-end cleavage of mammalian pre-mRNAs. This subunit is directly involved in the binding to pre-mRNAs. The protein is Cleavage stimulation factor subunit 2 (CSTF2) of Homo sapiens (Human).